The following is a 478-amino-acid chain: Septin-4 (478 aa).

Residues 1 to 115 (MDRSLGWQGN…RSPWGKLDPY (115 aa)) form a disordered region. Basic and acidic residues predominate over residues 13–26 (PEDRTEAGIKRFLE). Positions 95–108 (APAPLSPSARPRSP) are enriched in low complexity. Phosphoserine occurs at positions 117 and 118. A Septin-type G domain is found at 141-414 (KGFDFTLMVA…ENYRAQCIQS (274 aa)). Positions 151–158 (GESGLGKS) are G1 motif. Residues 151 to 158 (GESGLGKS) and threonine 185 contribute to the GTP site. The interval 208-211 (DTPG) is G3 motif. The segment at 289 to 292 (AKAD) is G4 motif. 290–298 (KADTLTPPE) serves as a coordination point for GTP. Serine 325 bears the Phosphoserine mark. 2 residues coordinate GTP: glycine 348 and arginine 363. The disordered stretch occupies residues 428-448 (LTRESGTDFPIPAVPPGTDPE). At serine 432 the chain carries Phosphoserine. Position 434 is a phosphothreonine (threonine 434). Residues 447-478 (PETEKLIREKDEELRRMQEMLHKIQKQMKENY) adopt a coiled-coil conformation.

The protein belongs to the TRAFAC class TrmE-Era-EngA-EngB-Septin-like GTPase superfamily. Septin GTPase family. In terms of assembly, septins polymerize into heterooligomeric protein complexes that form filaments, and can associate with cellular membranes, actin filaments and microtubules. GTPase activity is required for filament formation. Interacts with SEPTIN8. In a mesenchymal cell line, interacts with SEPTIN9 isoform 2 variants HNA Trp-106 and Phe-111, but not the wild type SEPTIN9. Component of a septin core octameric complex consisting of SEPTIN12, SEPTIN7, SEPTIN6 and SEPTIN2 or SEPTIN4 in the order 12-7-6-2-2-6-7-12 or 12-7-6-4-4-6-7-12. Interacts with SEPTIN14 (via C-terminus). Interacts with DYRK1A. Interacts with SLC6A3/DAT and SNCA/alpha-synuclein. Interacts with STX1A; in the striatum. Interacts with XIAP (via BIR3 domain) following the induction of apoptosis. Interacts with AREL1 (via HECT domain); in the cytoplasm following induction of apoptosis. As to quaternary structure, part of a complex composed of SEPTIN4 isoform ARTS, XIAP and BCL2, within the complex interacts with both BCL2 (via BH3 domain) and XIAP, ARTS acts as a scaffold protein and stabilizes the complex. Interacts with XIAP (via BIR3 domain) following the induction of apoptosis. Phosphorylated by DYRK1A. In terms of processing, ubiquitinated by AREL1. In terms of tissue distribution, widely expressed in adult and fetal tissues with highest expression in adult brain (at protein level), heart, liver and adrenal gland and fetal heart, kidney, liver and lung. Expressed in presynaptic terminals of dopaminergic neurons projecting from the substantia nigra pars compacta to the striatum (at protein level). Expressed in axonal varicosities in dopaminergic nerve terminals (at protein level). Expressed in the putamen and in the adjacent cerebral cortex (at protein level). Expressed in colonic crypts (at protein level). Also expressed in colorectal cancers and malignant melanomas. Expressed in platelets. Highly expressed in the brain and heart.

It is found in the cytoplasm. The protein resides in the cell projection. The protein localises to the cilium. Its subcellular location is the flagellum. It localises to the cytoplasmic vesicle. It is found in the secretory vesicle. The protein resides in the axon. The protein localises to the dendrite. Its subcellular location is the perikaryon. It localises to the synapse. It is found in the mitochondrion. The protein resides in the nucleus. In terms of biological role, filament-forming cytoskeletal GTPase. Pro-apoptotic protein involved in LGR5-positive intestinal stem cell and Paneth cell expansion in the intestines, via its interaction with XIAP. May also play a role in the regulation of cell fate in the intestine. Positive regulator of apoptosis involved in hematopoietic stem cell homeostasis; via its interaction with XIAP. Negative regulator of repair and hair follicle regeneration in response to injury, due to inhibition of hair follicle stem cell proliferation, potentially via its interaction with XIAP. Plays an important role in male fertility and sperm motility. During spermiogenesis, essential for the establishment of the annulus (a fibrous ring structure connecting the midpiece and the principal piece of the sperm flagellum) which is a requisite for the structural and mechanical integrity of the sperm. Involved in the migration of cortical neurons and the formation of neuron leading processes during embryonic development. Required for dopaminergic metabolism in presynaptic autoreceptors; potentially via activity as a presynaptic scaffold protein. Functionally, required for the induction of cell death mediated by TGF-beta and possibly by other apoptotic stimuli. Induces apoptosis through binding and inhibition of XIAP resulting in significant reduction in XIAP levels, leading to caspase activation and cell death. Mediates the interaction between BCL2 and XIAP, thereby positively regulating the ubiquitination and degradation of BCL2 and promoting apoptosis. In Homo sapiens (Human), this protein is Septin-4.